The sequence spans 447 residues: Lipid II isoglutaminyl synthase (glutamine-hydrolyzing) subunit MurT (447 aa).

Positions 205, 208, 227, and 230 each coordinate Zn(2+). Residue Asp355 is part of the active site.

Belongs to the MurCDEF family. MurT subfamily. In terms of assembly, forms a heterodimer with GatD.

It catalyses the reaction beta-D-GlcNAc-(1-&gt;4)-Mur2Ac(oyl-L-Ala-gamma-D-Glu-L-Lys-D-Ala-D-Ala)-di-trans,octa-cis-undecaprenyl diphosphate + L-glutamine + ATP + H2O = beta-D-GlcNAc-(1-&gt;4)-Mur2Ac(oyl-L-Ala-D-isoglutaminyl-L-Lys-D-Ala-D-Ala)-di-trans,octa-cis-undecaprenyl diphosphate + L-glutamate + ADP + phosphate + H(+). It carries out the reaction beta-D-GlcNAc-(1-&gt;4)-Mur2Ac(oyl-L-Ala-gamma-D-Glu-L-Lys-D-Ala-D-Ala)-di-trans,octa-cis-undecaprenyl diphosphate + ATP = beta-D-GlcNAc-(1-&gt;4)-Mur2Ac(oyl-L-Ala-gamma-D-O-P-Glu-L-Lys-D-Ala-D-Ala)-di-trans,octa-cis-undecaprenyl diphosphate + ADP. The enzyme catalyses beta-D-GlcNAc-(1-&gt;4)-Mur2Ac(oyl-L-Ala-gamma-D-O-P-Glu-L-Lys-D-Ala-D-Ala)-di-trans,octa-cis-undecaprenyl diphosphate + NH4(+) = beta-D-GlcNAc-(1-&gt;4)-Mur2Ac(oyl-L-Ala-D-isoglutaminyl-L-Lys-D-Ala-D-Ala)-di-trans,octa-cis-undecaprenyl diphosphate + phosphate + H(+). It functions in the pathway cell wall biogenesis; peptidoglycan biosynthesis. Its function is as follows. The lipid II isoglutaminyl synthase complex catalyzes the formation of alpha-D-isoglutamine in the cell wall lipid II stem peptide. The MurT subunit catalyzes the ATP-dependent amidation of D-glutamate residue of lipid II, converting it to an isoglutamine residue. The chain is Lipid II isoglutaminyl synthase (glutamine-hydrolyzing) subunit MurT from Streptococcus pneumoniae (strain ATCC BAA-255 / R6).